The primary structure comprises 431 residues: MKHLTEMVEQHKRGNTNGIYAVCSAHPLVLEAAIRYAHANHTPLLIEATSNQVDQFGGYTGMTPADFRGFVYQLADSLNFPQSQLILGGDHLGPNRWQNLPAAQAMANADDLIKSYVAAGFKKIHLDCSMSCANDPIPLTDEIVAERAARLAKIAEETCREHFGESDLVYVIGTEVPVPGGAHETLTELEVTTPDAARATLEAHRHAFEKQGLSAIWPRIIGLVVQPGVEFDHTHIIDYQPQKAIALSAMVEAYDTLVFEAHSTDYQTPQSLRQLVKDHFAILKVGPALTFALREALFSLAAIEEELLPAKTSSGLRHVLESVMLDRPEYWQSHYHGDGNARRLARGYSYSDRVRYYWPDQQIDEAFARLVRNLADDPIPLPLISQYLPLQYARVREGDLNATPRELIISHIQDVLQQYHAACQGVTSQNA.

It belongs to the GatZ/KbaZ family. KbaZ subfamily. Forms a complex with KbaY.

It functions in the pathway carbohydrate metabolism; D-tagatose 6-phosphate degradation; D-glyceraldehyde 3-phosphate and glycerone phosphate from D-tagatose 6-phosphate: step 2/2. In terms of biological role, component of the tagatose-1,6-bisphosphate aldolase KbaYZ that is required for full activity and stability of the Y subunit. Could have a chaperone-like function for the proper and stable folding of KbaY. When expressed alone, KbaZ does not show any aldolase activity. In Citrobacter koseri (strain ATCC BAA-895 / CDC 4225-83 / SGSC4696), this protein is D-tagatose-1,6-bisphosphate aldolase subunit KbaZ.